Here is a 390-residue protein sequence, read N- to C-terminus: Heat stress transcription factor B-2b (390 aa).

The tract at residues 165 to 212 is disordered; that stretch reads TRDGSPVLSGEEQVISSSSSPEPPLVLPQAPSGSGSGGVASGDVGDEN. Residues 206-237 adopt a coiled-coil conformation; sequence GDVGDENERLRRENAQLARELSQMRKLCNNIL. Positions 215–244 are hydrophobic repeat HR-A/B; it reads LRRENAQLARELSQMRKLCNNILLLMSKYA. The Nuclear localization signal motif lies at 318–322; sequence RKRMR. The interval 322–363 is disordered; that stretch reads RHDGGGDDDHAATVKAEPMDGRPHGKDEQSAETQAWPIYRPR. Residues 323-350 show a composition bias toward basic and acidic residues; it reads HDGGGDDDHAATVKAEPMDGRPHGKDEQ.

The protein belongs to the HSF family. Class B subfamily. As to quaternary structure, homotrimer. Exhibits temperature-dependent phosphorylation.

The protein resides in the nucleus. Functionally, transcriptional regulator that specifically binds DNA of heat shock promoter elements (HSE). This Oryza sativa subsp. japonica (Rice) protein is Heat stress transcription factor B-2b (HSFB2B).